The chain runs to 352 residues: Histidinol-phosphate aminotransferase (352 aa).

Position 221 is an N6-(pyridoxal phosphate)lysine (Lys-221).

This sequence belongs to the class-II pyridoxal-phosphate-dependent aminotransferase family. Histidinol-phosphate aminotransferase subfamily. In terms of assembly, homodimer. Pyridoxal 5'-phosphate serves as cofactor.

It catalyses the reaction L-histidinol phosphate + 2-oxoglutarate = 3-(imidazol-4-yl)-2-oxopropyl phosphate + L-glutamate. The protein operates within amino-acid biosynthesis; L-histidine biosynthesis; L-histidine from 5-phospho-alpha-D-ribose 1-diphosphate: step 7/9. The chain is Histidinol-phosphate aminotransferase from Staphylococcus aureus (strain MRSA252).